Reading from the N-terminus, the 146-residue chain is Villin-like protein ABP41 (146 aa).

The protein belongs to the villin/gelsolin family. As to quaternary structure, binds to actin. In terms of tissue distribution, expressed in pollen (at protein level).

The protein resides in the cytoplasm. Its subcellular location is the cytoskeleton. In terms of biological role, ca(2+)-dependent actin filament-severing protein that is required for pollen tube growth. Probably regulates the dynamics of the actin cytoskeleton. It can promote the assembly of monomers into filaments (nucleation) as well as sever filaments already formed. The chain is Villin-like protein ABP41 from Lilium davidii (David's lily).